The following is a 253-amino-acid chain: TasA anchoring/assembly protein (253 aa).

The first 32 residues, 1-32 (MFRLFHNQQKAKTKLKVLLIFQLSVIFSLTAA), serve as a signal peptide directing secretion. An important for TasA fiber formation region spans residues 50 to 57 (TFDVSLQT). Residues 190 to 241 (EKPTVPKKETKSDVKKENETTQKDIPEKTMKEETSQEAVTKEKETQSDQKES) are compositionally biased toward basic and acidic residues. The interval 190–253 (EKPTVPKKET…EDEKSNEADQ (64 aa)) is disordered.

It localises to the secreted. It is found in the cell wall. Required for biofilm formation. Required for the proper anchoring and polymerization of TasA amyloid fibers at the cell surface. Is also a minor component of TasA fibers. The protein is TasA anchoring/assembly protein of Bacillus subtilis (strain 168).